A 180-amino-acid polypeptide reads, in one-letter code: Flavodoxin B (180 aa).

In terms of domain architecture, Flavodoxin-like spans 4–173 (IGLFFGSNTG…RVAAWLAQIA (170 aa)).

Belongs to the flavodoxin family. Requires FMN as cofactor.

Its function is as follows. Low-potential electron donor to a number of redox enzymes. NifF is the electron donor to nitrogenase. The sequence is that of Flavodoxin B (nifF) from Azotobacter chroococcum mcd 1.